The chain runs to 609 residues: Cell division protein DipM (609 aa).

Residues 1 to 24 (MRQLWTQAAVIALTAGTLGAPAHA) form the signal peptide. A disordered region spans residues 21–103 (PAHASGQSGQ…PVLRATPPRT (83 aa)). The segment covering 25–38 (SGQSGQRFTPNFPI) has biased composition (polar residues). The span at 79 to 93 (LPPPAPVSTPAPAPQ) shows a compositional bias: pro residues. 2 LysM domains span residues 121-165 (QVRV…KIKG) and 171-215 (KAYV…KLLL). Composition is skewed to low complexity over residues 242 to 258 (AEPA…AATP) and 265 to 280 (PVSE…STTT). Residues 242–280 (AEPAPATTRPATPAATPSRPVRQPVSEETSEPATTSTTT) are disordered. 2 LysM domains span residues 295–339 (QVHT…KIKG) and 345–389 (KAYS…KIAL). The segment at 389–457 (LPDGFRDKGP…AAQPITPPPS (69 aa)) is disordered. A compositionally biased stretch (low complexity) spans 400–429 (RTTTTTRPATPPANTYARVDSSAAAASTPS). The segment at 503–603 (NDGLNIRAPQ…VKDKAKPVDP (101 aa)) is lytM.

It localises to the periplasm. Its function is as follows. Required for efficient cell division, cell polarity and normal cell morphology. Facilitates remodeling of the peptidoglycan layer and, thus, coordinated constriction of the cell envelope during the division process. Plays a critical role in maintaining proper cell envelope architecture during growth and division. Required for normal envelope invagination during cell division and to establish or maintain outer membrane connections throughout the cell envelope. May serve as a regulatory hub coordinating the activities of multiple peptidoglycan-degrading enzymes during cell constriction. Required to position SdpA and SdpB at midcell. This Caulobacter vibrioides (strain NA1000 / CB15N) (Caulobacter crescentus) protein is Cell division protein DipM.